The following is a 423-amino-acid chain: UPF0229 protein PSPTO_0546 (423 aa).

Residues 65–110 (HHGRGGKQTVVHPGNKEFTTGEHIARPQGGAGGKGPGKAGNSGEGM) form a disordered region. Residues 93–107 (GGAGGKGPGKAGNSG) show a composition bias toward gly residues.

The protein belongs to the UPF0229 family.

This chain is UPF0229 protein PSPTO_0546, found in Pseudomonas syringae pv. tomato (strain ATCC BAA-871 / DC3000).